A 147-amino-acid polypeptide reads, in one-letter code: Large ribosomal subunit protein uL13 (147 aa).

Belongs to the universal ribosomal protein uL13 family. In terms of assembly, part of the 50S ribosomal subunit.

In terms of biological role, this protein is one of the early assembly proteins of the 50S ribosomal subunit, although it is not seen to bind rRNA by itself. It is important during the early stages of 50S assembly. This chain is Large ribosomal subunit protein uL13, found in Salinispora arenicola (strain CNS-205).